Reading from the N-terminus, the 612-residue chain is Putative zinc metalloproteinase C607.06c (612 aa).

Residue His303 coordinates Zn(2+). Residue Glu304 is part of the active site. Positions 307 and 313 each coordinate Zn(2+). The Jacalin-type lectin domain maps to 477-612 (VYRSERYGLR…FMDSIGFFIK (136 aa)).

The protein belongs to the peptidase M10B family. The cofactor is Zn(2+).

This is Putative zinc metalloproteinase C607.06c from Schizosaccharomyces pombe (strain 972 / ATCC 24843) (Fission yeast).